The following is a 331-amino-acid chain: Ornithine carbamoyltransferase (331 aa).

Residues 55–58 (STRT), glutamine 82, arginine 106, and 133–136 (HPTQ) each bind carbamoyl phosphate. L-ornithine is bound by residues asparagine 166, aspartate 230, and 234-235 (SM). Residues 272-273 (CL) and arginine 317 each bind carbamoyl phosphate.

Belongs to the aspartate/ornithine carbamoyltransferase superfamily. OTCase family.

The protein localises to the cytoplasm. The enzyme catalyses carbamoyl phosphate + L-ornithine = L-citrulline + phosphate + H(+). Its pathway is amino-acid biosynthesis; L-arginine biosynthesis; L-arginine from L-ornithine and carbamoyl phosphate: step 1/3. In terms of biological role, reversibly catalyzes the transfer of the carbamoyl group from carbamoyl phosphate (CP) to the N(epsilon) atom of ornithine (ORN) to produce L-citrulline. The polypeptide is Ornithine carbamoyltransferase (Neisseria gonorrhoeae (strain ATCC 700825 / FA 1090)).